A 122-amino-acid polypeptide reads, in one-letter code: Small ribosomal subunit protein uS12c (122 aa).

Belongs to the universal ribosomal protein uS12 family. As to quaternary structure, part of the 30S ribosomal subunit.

The protein localises to the plastid. Its subcellular location is the chloroplast. With S4 and S5 plays an important role in translational accuracy. Located at the interface of the 30S and 50S subunits. The polypeptide is Small ribosomal subunit protein uS12c (rps12) (Chloranthus spicatus (Chulantree)).